The following is a 609-amino-acid chain: Threonine--tRNA ligase (609 aa).

The editing domain stretch occupies residues 1–145; the sequence is MRLLLIHSDY…TIVPGAGAAV (145 aa). Residues 194–485 form a catalytic region; sequence IHVDLMRSKE…TANQSVPQLP (292 aa). Zn(2+) contacts are provided by Cys286, His338, and His458.

This sequence belongs to the class-II aminoacyl-tRNA synthetase family. As to quaternary structure, homodimer. It depends on Zn(2+) as a cofactor.

The protein resides in the cytoplasm. The enzyme catalyses tRNA(Thr) + L-threonine + ATP = L-threonyl-tRNA(Thr) + AMP + diphosphate + H(+). Catalyzes the attachment of threonine to tRNA(Thr) in a two-step reaction: L-threonine is first activated by ATP to form Thr-AMP and then transferred to the acceptor end of tRNA(Thr). Also edits incorrectly charged L-seryl-tRNA(Thr). This Methanosphaerula palustris (strain ATCC BAA-1556 / DSM 19958 / E1-9c) protein is Threonine--tRNA ligase.